We begin with the raw amino-acid sequence, 166 residues long: T-cell surface glycoprotein CD3 zeta chain (166 aa).

The signal sequence occupies residues 1–21 (MKWTALVIVAVLQTQFPVTAA). Residues 22–30 (QSFGLLDPK) are Extracellular-facing. The chain crosses the membrane as a helical span at residues 31–51 (LCYLLDGILFIYGVIVTALFL). Residues 52-166 (RAKFSRSADA…ALHMQALPPR (115 aa)) lie on the Cytoplasmic side of the membrane. Phosphoserine is present on S58. 3 ITAM domains span residues 61 to 89 (APAY…LDRR), 100 to 128 (PQRK…EIGM), and 133 to 161 (QRRR…LHMQ). 7 positions are modified to phosphotyrosine: Y64, Y72, Y83, Y111, Y123, Y144, and Y155. A disordered region spans residues 126–156 (IGMKSDNQRRRGKGHDGVYQGLSTATKDTYD).

It belongs to the CD3Z/FCER1G family. The TCR-CD3 complex is composed of a CD3D/CD3E and a CD3G/CD3E heterodimers that preferentially associate with TCRalpha and TCRbeta, respectively, to form TCRalpha/CD3E/CD3G and TCRbeta/CD3G/CD3E trimers. In turn, the hexamer interacts with CD3Z homodimer to form the TCR-CD3 complex. Alternatively, TCRalpha and TCRbeta can be replaced by TCRgamma and TCRdelta. Interacts with SLA. Interacts with TRAT1. Interacts with DOCK2. Interacts with SLA2. Interacts with SHB. Interacts with ZAP70. Interacts (tyrosine phosphorylated) with SHC1 (via SH2 domain). Interacts with PTPRC. Interacts with CRK; this interaction regulates CD3Z phosphorylation. Interacts (on T cell side) with CD81, ICAM1 and CD9 at immunological synapses between antigen-presenting cells and T cells. Interacts with CD160. Interacts with LY6E. Interacts with LY6E. The signaling subunit of immunoglobulin gamma (IgG) Fc receptor complex. As a homodimer or a heterodimer with FCER1G, associates with the ligand binding subunit FCGR3A (via transmembrane domain); this interaction is a prerequisite for Fc receptor complex expression on the cell surface. Interacts with CD5. Phosphorylated on Tyr residues after T-cell receptor triggering by LCK in association with CD4/CD8.

The protein localises to the cell membrane. In terms of biological role, part of the TCR-CD3 complex present on T-lymphocyte cell surface that plays an essential role in adaptive immune response. When antigen presenting cells (APCs) activate T-cell receptor (TCR), TCR-mediated signals are transmitted across the cell membrane by the CD3 chains CD3D, CD3E, CD3G and CD3Z. All CD3 chains contain immunoreceptor tyrosine-based activation motifs (ITAMs) in their cytoplasmic domain. Upon TCR engagement, these motifs become phosphorylated by Src family protein tyrosine kinases LCK and FYN, resulting in the activation of downstream signaling pathways. CD3Z ITAMs phosphorylation creates multiple docking sites for the protein kinase ZAP70 leading to ZAP70 phosphorylation and its conversion into a catalytically active enzyme. Plays an important role in intrathymic T-cell differentiation. Additionally, participates in the activity-dependent synapse formation of retinal ganglion cells (RGCs) in both the retina and dorsal lateral geniculate nucleus (dLGN). The protein is T-cell surface glycoprotein CD3 zeta chain (CD247) of Ovis aries (Sheep).